Here is a 436-residue protein sequence, read N- to C-terminus: Glutamyl-tRNA reductase (436 aa).

Substrate is bound by residues 56–59 (TCNR), S114, 119–121 (EAQ), and Q125. C57 (nucleophile) is an active-site residue. Residue 194–199 (GAGEMI) coordinates NADP(+).

The protein belongs to the glutamyl-tRNA reductase family. As to quaternary structure, homodimer.

It carries out the reaction (S)-4-amino-5-oxopentanoate + tRNA(Glu) + NADP(+) = L-glutamyl-tRNA(Glu) + NADPH + H(+). Its pathway is porphyrin-containing compound metabolism; protoporphyrin-IX biosynthesis; 5-aminolevulinate from L-glutamyl-tRNA(Glu): step 1/2. In terms of biological role, catalyzes the NADPH-dependent reduction of glutamyl-tRNA(Glu) to glutamate 1-semialdehyde (GSA). The polypeptide is Glutamyl-tRNA reductase (Acidovorax sp. (strain JS42)).